Here is a 142-residue protein sequence, read N- to C-terminus: FAD synthase (142 aa).

Residues 9–10 (VF), 14–17 (HLGH), Asp-93, and Tyr-120 contribute to the ATP site.

This sequence belongs to the archaeal FAD synthase family. In terms of assembly, homodimer. It depends on a divalent metal cation as a cofactor.

The catalysed reaction is FMN + ATP + H(+) = FAD + diphosphate. It functions in the pathway cofactor biosynthesis; FAD biosynthesis; FAD from FMN: step 1/1. In terms of biological role, catalyzes the transfer of the AMP portion of ATP to flavin mononucleotide (FMN) to produce flavin adenine dinucleotide (FAD) coenzyme. This Thermoplasma volcanium (strain ATCC 51530 / DSM 4299 / JCM 9571 / NBRC 15438 / GSS1) protein is FAD synthase (ribL).